The following is a 271-amino-acid chain: HTH-type transcriptional repressor AllR (271 aa).

The HTH iclR-type domain occupies 21-83; it reads AQALERGIAI…SQLGWWHIGL (63 aa). Residues 43 to 62 constitute a DNA-binding region (H-T-H motif); it reads VSDISLNLDLPLSTTFRLLK. Positions 98–267 constitute an IclR-ED domain; the sequence is VLSVAGPFMR…ARDISTALGL (170 aa). Glyoxylate is bound by residues 154–156, aspartate 207, cysteine 217, and 234–236; these read SGA and SIS.

Negative regulator of allantoin and glyoxylate utilization operons. Binds to the gcl promoter and to the allS-allA intergenic region. This chain is HTH-type transcriptional repressor AllR (allR), found in Escherichia coli (strain UTI89 / UPEC).